A 512-amino-acid polypeptide reads, in one-letter code: 2,3-bisphosphoglycerate-independent phosphoglycerate mutase (512 aa).

Mn(2+) contacts are provided by D11 and S61. The Phosphoserine intermediate role is filled by S61. Substrate is bound by residues H122, 152 to 153, R184, R190, 259 to 262, and K332; these read RD and RADR. Positions 399, 403, 440, 441, and 459 each coordinate Mn(2+).

The protein belongs to the BPG-independent phosphoglycerate mutase family. Monomer. Mn(2+) is required as a cofactor.

The enzyme catalyses (2R)-2-phosphoglycerate = (2R)-3-phosphoglycerate. It participates in carbohydrate degradation; glycolysis; pyruvate from D-glyceraldehyde 3-phosphate: step 3/5. Catalyzes the interconversion of 2-phosphoglycerate and 3-phosphoglycerate. The protein is 2,3-bisphosphoglycerate-independent phosphoglycerate mutase of Francisella tularensis subsp. holarctica (strain FTNF002-00 / FTA).